The primary structure comprises 619 residues: Pescadillo homolog (619 aa).

Residues 303 to 324 (ADKDQKDQDTIEDAEEVTEPTV) are disordered. Residues 312–324 (TIEDAEEVTEPTV) are compositionally biased toward acidic residues. A BRCT domain is found at 353–452 (PTSQLFSKFI…ELVSVGDYAP (100 aa)). The interval 456-567 (LPPHLSPWGD…STKAALTPEE (112 aa)) is disordered. Coiled coils occupy residues 472 to 560 (NAKA…ASTK) and 588 to 619 (MQYG…LKDV). Residues 480 to 522 (EAEEEEEEEEEDEEEEEEEEEIEVADGDEDQDDEEEEEIEDED) show a composition bias toward acidic residues. A compositionally biased stretch (basic and acidic residues) spans 523–539 (LKAQKELEMEVAGKKFS).

It belongs to the pescadillo family. Component of the NOP7 complex, composed of ERB1, NOP7 and YTM1. The complex is held together by ERB1, which interacts with NOP7 via its N-terminal domain and with YTM1 via a high-affinity interaction between the seven-bladed beta-propeller domains of the 2 proteins. The NOP7 complex associates with the 66S pre-ribosome.

The protein localises to the nucleus. It is found in the nucleolus. Its subcellular location is the nucleoplasm. Functionally, component of the NOP7 complex, which is required for maturation of the 25S and 5.8S ribosomal RNAs and formation of the 60S ribosome. In Lodderomyces elongisporus (strain ATCC 11503 / CBS 2605 / JCM 1781 / NBRC 1676 / NRRL YB-4239) (Yeast), this protein is Pescadillo homolog.